We begin with the raw amino-acid sequence, 488 residues long: Protein nucleotidyltransferase YdiU (488 aa).

Positions 91, 93, 94, 114, 126, 127, 177, and 184 each coordinate ATP. Asp-253 (proton acceptor) is an active-site residue. Mg(2+) is bound by residues Asn-254 and Asp-263. Residue Asp-263 coordinates ATP.

The protein belongs to the SELO family. Requires Mg(2+) as cofactor. The cofactor is Mn(2+).

It carries out the reaction L-seryl-[protein] + ATP = 3-O-(5'-adenylyl)-L-seryl-[protein] + diphosphate. The catalysed reaction is L-threonyl-[protein] + ATP = 3-O-(5'-adenylyl)-L-threonyl-[protein] + diphosphate. It catalyses the reaction L-tyrosyl-[protein] + ATP = O-(5'-adenylyl)-L-tyrosyl-[protein] + diphosphate. The enzyme catalyses L-histidyl-[protein] + UTP = N(tele)-(5'-uridylyl)-L-histidyl-[protein] + diphosphate. It carries out the reaction L-seryl-[protein] + UTP = O-(5'-uridylyl)-L-seryl-[protein] + diphosphate. The catalysed reaction is L-tyrosyl-[protein] + UTP = O-(5'-uridylyl)-L-tyrosyl-[protein] + diphosphate. Functionally, nucleotidyltransferase involved in the post-translational modification of proteins. It can catalyze the addition of adenosine monophosphate (AMP) or uridine monophosphate (UMP) to a protein, resulting in modifications known as AMPylation and UMPylation. The chain is Protein nucleotidyltransferase YdiU from Bacillus cereus (strain ATCC 14579 / DSM 31 / CCUG 7414 / JCM 2152 / NBRC 15305 / NCIMB 9373 / NCTC 2599 / NRRL B-3711).